The chain runs to 153 residues: Protein ripply2.2 (153 aa).

The WRPW motif; required for transcriptional repression and interaction with tle4 signature appears at 58–61 (WRPW). The interval 93–128 (HPVRLFWPKSKLLDNTYQEAADLLRNFPVQATISLY) is ripply homology domain. The segment at 127–153 (LYNDSESDTDNEEDSSEEEQDSGFESE) is disordered. Positions 131-153 (SESDTDNEEDSSEEEQDSGFESE) are enriched in acidic residues.

Belongs to the ripply family. In terms of assembly, interacts with tle4 and tbx6, and mediates interaction between these proteins. As to expression, expressed in the presomitic mesoderm (PSM) in the anterior halves of somitomeres S-I, S-II and S-III.

The protein localises to the nucleus. Functionally, required during somitogenesis for the formation of somite boundaries. Represses the expression of genes involved in somite segmentation by acting with the corepressor tle4 to down-regulate the transcriptional activity of tbx6. May act by regulating the activity of tle4. Represses transcription of delta2, thy1 and ripply2.2/bowline itself. The protein is Protein ripply2.2 (ripply2.2) of Xenopus laevis (African clawed frog).